The chain runs to 76 residues: MLIPHDLLEADTLNNLLEDFVTREGTDNGDETPLDVRVERARHALRRGEAVILFDPESQQCQLMLRSEVPAELLRD.

This sequence belongs to the UPF0270 family.

This is UPF0270 protein PSPA7_1664 from Pseudomonas paraeruginosa (strain DSM 24068 / PA7) (Pseudomonas aeruginosa (strain PA7)).